The following is a 173-amino-acid chain: Small ribosomal subunit protein uS10m (173 aa).

This sequence belongs to the universal ribosomal protein uS10 family. In terms of assembly, component of the mitochondrial ribosome small subunit (28S) which comprises a 12S rRNA and about 30 distinct proteins.

It localises to the mitochondrion. The chain is Small ribosomal subunit protein uS10m (mRpS10) from Drosophila melanogaster (Fruit fly).